The primary structure comprises 282 residues: 4-diphosphocytidyl-2-C-methyl-D-erythritol kinase (282 aa).

Residue Lys13 is part of the active site. Position 96–106 (96–106) interacts with ATP; sequence PMGGGIGGGSS. The active site involves Asp138.

It belongs to the GHMP kinase family. IspE subfamily.

It carries out the reaction 4-CDP-2-C-methyl-D-erythritol + ATP = 4-CDP-2-C-methyl-D-erythritol 2-phosphate + ADP + H(+). It participates in isoprenoid biosynthesis; isopentenyl diphosphate biosynthesis via DXP pathway; isopentenyl diphosphate from 1-deoxy-D-xylulose 5-phosphate: step 3/6. Its function is as follows. Catalyzes the phosphorylation of the position 2 hydroxy group of 4-diphosphocytidyl-2C-methyl-D-erythritol. The polypeptide is 4-diphosphocytidyl-2-C-methyl-D-erythritol kinase (Pseudomonas syringae pv. tomato (strain ATCC BAA-871 / DC3000)).